Consider the following 455-residue polypeptide: MARPVVAIIGRPNVGKSTLVNRLCRSREAIVHDQPGVTRDRTYQDGYWGDREFKVVDTGGLVFDDDSEFLPEIREQAALALDEASVALVIVDGKQGLTAADESIAEFLRQQRCPTLLAVNKCESVEQGLAMAAEFWSLGLGEPYPISAIHGAGTAEVLDQVLTFLPPKDQEGDEEEPIQMSIIGRPNVGKSSLLNAICGEQRAIVSPIRGTTRDTIDTNIVRENRPWRLVDTAGIRRRRSVNYGPEYFGINRSFKAIERSDVCVLVIDALDGVTEQDQRLAGRIEEDGRACVVVVNKWDAVEKDSHTMSATEKELRAKLYFLDWAPMLFTSALTGQRVESIFALAALAVEQHRRRVTTSVVNEVLKEALSWRSPPTTRGGRQGKLYYGTQVASRPPSFTLFVNDPKLFGDTYRRYVERHIREGLGFDGTPLKLFWRGKQQRDAEKELARQQNRRG.

2 EngA-type G domains span residues 4–169 and 178–353; these read PVVA…PPKD and IQMS…EQHR. Residues 10 to 17, 57 to 61, 120 to 123, 184 to 191, 231 to 235, and 296 to 299 contribute to the GTP site; these read GRPNVGKS, DTGGL, NKCE, DTAGI, and NKWD. The region spanning 354-439 is the KH-like domain; sequence RRVTTSVVNE…PLKLFWRGKQ (86 aa).

The protein belongs to the TRAFAC class TrmE-Era-EngA-EngB-Septin-like GTPase superfamily. EngA (Der) GTPase family. As to quaternary structure, associates with the 50S ribosomal subunit.

Functionally, GTPase that plays an essential role in the late steps of ribosome biogenesis. This Synechococcus sp. (strain CC9902) protein is GTPase Der.